A 193-amino-acid polypeptide reads, in one-letter code: Ribonuclease HII (193 aa).

The region spanning 15–193 (CIVAGIDEAG…PYHRRSFRCC (179 aa)) is the RNase H type-2 domain. Positions 21, 22, and 112 each coordinate a divalent metal cation.

The protein belongs to the RNase HII family. It depends on Mn(2+) as a cofactor. The cofactor is Mg(2+).

It localises to the cytoplasm. The catalysed reaction is Endonucleolytic cleavage to 5'-phosphomonoester.. In terms of biological role, endonuclease that specifically degrades the RNA of RNA-DNA hybrids. This chain is Ribonuclease HII, found in Rickettsia africae (strain ESF-5).